A 141-amino-acid chain; its full sequence is MSLDELRDRAALYALIAAGSVIGGCARYLVGVAQLSLLGTDFPWATLFVNVTGSFVIGFYAAIAGPDGRLFASSRQRQFVMTGICGGYTTFSGFSLETFQLLRTGHALAALINLGVSPMSWLVAVWLGHLVATRLNRLKGT.

4 helical membrane-spanning segments follow: residues Leu-12 to Val-32, Trp-44 to Ala-64, Phe-79 to Phe-99, and Ala-107 to Leu-127. Na(+)-binding residues include Gly-86 and Thr-89.

The protein belongs to the fluoride channel Fluc/FEX (TC 1.A.43) family.

It localises to the cell inner membrane. The enzyme catalyses fluoride(in) = fluoride(out). Na(+) is not transported, but it plays an essential structural role and its presence is essential for fluoride channel function. In terms of biological role, fluoride-specific ion channel. Important for reducing fluoride concentration in the cell, thus reducing its toxicity. The sequence is that of Fluoride-specific ion channel FluC 1 from Rhodopseudomonas palustris (strain BisB18).